We begin with the raw amino-acid sequence, 309 residues long: tRNA pseudouridine synthase B (309 aa).

The active-site Nucleophile is the D39.

This sequence belongs to the pseudouridine synthase TruB family. Type 1 subfamily.

It carries out the reaction uridine(55) in tRNA = pseudouridine(55) in tRNA. In terms of biological role, responsible for synthesis of pseudouridine from uracil-55 in the psi GC loop of transfer RNAs. The chain is tRNA pseudouridine synthase B from Bacillus pumilus (strain SAFR-032).